The sequence spans 805 residues: Transducer protein BasT (805 aa).

2 consecutive transmembrane segments (helical) span residues 25 to 45 (FNVL…YIHL) and 296 to 316 (NLAG…LTVG). 2 HAMP domains span residues 317-370 (RRTS…TAAS) and 437-490 (ERLE…ATLA). The Methyl-accepting transducer domain maps to 509–745 (SAAEIRSASD…EVVTMIDEVT (237 aa)). Residues 513-532 (IRSASDQVSESVQDISADAD) form a disordered region. Over residues 516–526 (ASDQVSESVQD) the composition is skewed to polar residues. A glutamate methyl ester (Glu) mark is found at E554, E736, and E763. Positions 752–779 (ATESQQVSAAAEEQAASVSEVAGRADDL) are disordered. Residues 754–773 (ESQQVSAAAEEQAASVSEVA) show a composition bias toward low complexity.

Belongs to the methyl-accepting chemotaxis (MCP) protein family. In terms of assembly, interacts with CheA, CheY, CheW1 and CheW2. In terms of processing, methylated by CheR.

The protein resides in the cell membrane. In terms of biological role, mediates chemotaxis towards five attractant amino acids (leucine, isoleucine, valine, methionine and cysteine). Probably transduces the signal from the substrate-binding protein BasB to the histidine kinase CheA. The chain is Transducer protein BasT (basT) from Halobacterium salinarum (strain ATCC 29341 / DSM 671 / R1).